The primary structure comprises 256 residues: Type III pantothenate kinase (256 aa).

7 to 14 is a binding site for ATP; sequence DIGNTNVV. A substrate-binding site is contributed by 108 to 111; sequence GADC. Asp110 acts as the Proton acceptor in catalysis. Asp130 contributes to the K(+) binding site. Thr133 contacts ATP. Thr185 contacts substrate.

It belongs to the type III pantothenate kinase family. In terms of assembly, homodimer. It depends on NH4(+) as a cofactor. Requires K(+) as cofactor.

Its subcellular location is the cytoplasm. The enzyme catalyses (R)-pantothenate + ATP = (R)-4'-phosphopantothenate + ADP + H(+). It functions in the pathway cofactor biosynthesis; coenzyme A biosynthesis; CoA from (R)-pantothenate: step 1/5. Functionally, catalyzes the phosphorylation of pantothenate (Pan), the first step in CoA biosynthesis. This is Type III pantothenate kinase from Bifidobacterium adolescentis (strain ATCC 15703 / DSM 20083 / NCTC 11814 / E194a).